We begin with the raw amino-acid sequence, 282 residues long: Pyridoxal 5'-phosphate synthase subunit PdxS (282 aa).

A D-ribose 5-phosphate-binding site is contributed by Asp14. Residue Lys71 is the Schiff-base intermediate with D-ribose 5-phosphate of the active site. Gly143 lines the D-ribose 5-phosphate pocket. Arg155 contributes to the D-glyceraldehyde 3-phosphate binding site. Residues Gly204 and 225–226 (GS) each bind D-ribose 5-phosphate.

Belongs to the PdxS/SNZ family. In the presence of PdxT, forms a dodecamer of heterodimers.

It catalyses the reaction aldehydo-D-ribose 5-phosphate + D-glyceraldehyde 3-phosphate + L-glutamine = pyridoxal 5'-phosphate + L-glutamate + phosphate + 3 H2O + H(+). Its pathway is cofactor biosynthesis; pyridoxal 5'-phosphate biosynthesis. Its function is as follows. Catalyzes the formation of pyridoxal 5'-phosphate from ribose 5-phosphate (RBP), glyceraldehyde 3-phosphate (G3P) and ammonia. The ammonia is provided by the PdxT subunit. Can also use ribulose 5-phosphate and dihydroxyacetone phosphate as substrates, resulting from enzyme-catalyzed isomerization of RBP and G3P, respectively. This is Pyridoxal 5'-phosphate synthase subunit PdxS from Treponema denticola (strain ATCC 35405 / DSM 14222 / CIP 103919 / JCM 8153 / KCTC 15104).